A 923-amino-acid polypeptide reads, in one-letter code: Protocadherin gamma-B5 (923 aa).

Residues 1-30 (MGSGAGELGRAERLPVLFLFLLSLFCPALC) form the signal peptide. 6 consecutive Cadherin domains span residues 31 to 133 (EQIR…TPKF), 134 to 242 (TQNS…PPVF), 243 to 343 (NRDV…SPEV), 344 to 448 (TFHS…APVF), 449 to 558 (HQAS…APRV), and 566 to 671 (DGSA…LPDI). Topologically, residues 31 to 687 (EQIRYRIPEE…SDPQAELQFY (657 aa)) are extracellular. 2 N-linked (GlcNAc...) asparagine glycosylation sites follow: N415 and N541. Residues 688 to 708 (LVVALALISVLFLLAVILAVA) form a helical membrane-spanning segment. Topologically, residues 709-923 (LRLRRSSSPA…KKKSGKKEKK (215 aa)) are cytoplasmic. Disordered stretches follow at residues 794–832 (TSHP…WPNN) and 893–923 (ATLT…KEKK). Over residues 807–832 (WRFSQAQRPGTSGSQNGDDTGTWPNN) the composition is skewed to polar residues. The segment covering 913-923 (NKKKSGKKEKK) has biased composition (basic residues).

The protein localises to the cell membrane. Functionally, potential calcium-dependent cell-adhesion protein. May be involved in the establishment and maintenance of specific neuronal connections in the brain. This chain is Protocadherin gamma-B5 (PCDHGB5), found in Homo sapiens (Human).